A 273-amino-acid chain; its full sequence is Protein FAM210A (273 aa).

The segment at Val-95–Leu-116 is disordered. Positions Pro-106–Leu-116 are enriched in basic and acidic residues. In terms of domain architecture, DUF1279 spans Asp-118–Lys-230. A helical transmembrane segment spans residues Leu-138–Ile-158. A coiled-coil region spans residues Leu-233–Val-272. The segment at Lys-247 to Glu-273 is disordered.

The protein belongs to the FAM210 family. Interacts with ATAD3A.

The protein resides in the membrane. Its subcellular location is the mitochondrion. The protein localises to the cytoplasm. In terms of biological role, may play a role in the structure and strength of both muscle and bone. This chain is Protein FAM210A (Fam210a), found in Rattus norvegicus (Rat).